The chain runs to 1154 residues: Coiled-coil domain-containing protein 136 (1154 aa).

A disordered region spans residues methionine 1–histidine 48. Residues tyrosine 14–glutamate 32 are compositionally biased toward acidic residues. Position 52 is a phosphoserine (serine 52). Coiled coils occupy residues glutamine 696–glutamine 733 and lysine 859–valine 974. Residues aspartate 1031–cysteine 1058 are compositionally biased toward basic and acidic residues. Positions aspartate 1031 to phenylalanine 1131 are disordered. Residues aspartate 1077 to glutamate 1109 are compositionally biased toward acidic residues. The chain crosses the membrane as a helical span at residues isoleucine 1130–alanine 1150.

Expressed in gastric tissues. Down-regulated in gastric cancer.

It localises to the cytoplasmic vesicle. The protein resides in the secretory vesicle. It is found in the acrosome membrane. Functionally, may play a role in acrosome formation in spermatogenesis and in fertilization. In Homo sapiens (Human), this protein is Coiled-coil domain-containing protein 136 (CCDC136).